The sequence spans 116 residues: MNLISTVILIASALSLILILVSFWLPQLSPDYEKLSPYECGFDPLGSARLPFSLRFFLIAILFLLFDLEIALLLPLPWGDQLSNPTLTFMWATSVLALLTLGLIYEWLQGGLEWAE.

3 helical membrane-spanning segments follow: residues Leu3 to Phe23, Phe56 to Leu76, and Leu87 to Trp107.

It belongs to the complex I subunit 3 family.

The protein localises to the mitochondrion membrane. It carries out the reaction a ubiquinone + NADH + 5 H(+)(in) = a ubiquinol + NAD(+) + 4 H(+)(out). In terms of biological role, core subunit of the mitochondrial membrane respiratory chain NADH dehydrogenase (Complex I) that is believed to belong to the minimal assembly required for catalysis. Complex I functions in the transfer of electrons from NADH to the respiratory chain. The immediate electron acceptor for the enzyme is believed to be ubiquinone. This is NADH-ubiquinone oxidoreductase chain 3 (MT-ND3) from Gadus morhua (Atlantic cod).